Here is a 316-residue protein sequence, read N- to C-terminus: Phosphoglycerate mutase-like protein AT74 (316 aa).

The Tele-phosphohistidine intermediate role is filled by H17. E106 functions as the Proton donor/acceptor in the catalytic mechanism. The disordered stretch occupies residues 275–316 (KECETEATEDREEEEEEEGKRVNLLTSSEYSNEPELYNGQCC). The span at 279 to 291 (TEATEDREEEEEE) shows a compositional bias: acidic residues.

It belongs to the phosphoglycerate mutase family. In terms of tissue distribution, expressed in roots, leaves, stems, flowers and siliques.

Phosphoglycerate mutase-like protein lacking PGM activity. May play a role in carbohydrates metabolism. The polypeptide is Phosphoglycerate mutase-like protein AT74 (Arabidopsis thaliana (Mouse-ear cress)).